The primary structure comprises 671 residues: DNA ligase (671 aa).

Residues 32-36, 81-82, and Glu-113 each bind NAD(+); these read DAEYD and SL. Lys-115 acts as the N6-AMP-lysine intermediate in catalysis. NAD(+) is bound by residues Arg-136, Glu-173, Lys-290, and Lys-314. Residues Cys-408, Cys-411, Cys-426, and Cys-432 each contribute to the Zn(2+) site. Positions 593–671 constitute a BRCT domain; it reads EIDSPFAGKT…EAEMIRLLGA (79 aa).

This sequence belongs to the NAD-dependent DNA ligase family. LigA subfamily. Mg(2+) serves as cofactor. Requires Mn(2+) as cofactor.

The enzyme catalyses NAD(+) + (deoxyribonucleotide)n-3'-hydroxyl + 5'-phospho-(deoxyribonucleotide)m = (deoxyribonucleotide)n+m + AMP + beta-nicotinamide D-nucleotide.. In terms of biological role, DNA ligase that catalyzes the formation of phosphodiester linkages between 5'-phosphoryl and 3'-hydroxyl groups in double-stranded DNA using NAD as a coenzyme and as the energy source for the reaction. It is essential for DNA replication and repair of damaged DNA. The protein is DNA ligase of Salmonella heidelberg (strain SL476).